The primary structure comprises 284 residues: RAD52 motif-containing protein 1 (284 aa).

The interval 1–92 is necessary for nuclear localization and for nucleolar accumulation in response to heat shock; the sequence is MAELVPFAVP…KQLFQKSPVK (92 aa). Residues 15 to 98 form the RRM domain; it reads KTLLVWELSS…SPVKVRLGTR (84 aa). The necessary for nuclear and nucleolar localization stretch occupies residues 90 to 133; sequence PVKVRLGTRHKAVQHQALALNSSRCQELANYYFGFNGWSKRIIK.

In terms of assembly, homodimer.

It localises to the nucleus. The protein resides in the cytoplasm. It is found in the nucleolus. Its subcellular location is the cajal body. The protein localises to the PML body. Functionally, may confer resistance to the antitumor agent cisplatin. Binds to DNA and RNA. This Macaca fascicularis (Crab-eating macaque) protein is RAD52 motif-containing protein 1 (RDM1).